The sequence spans 67 residues: Large ribosomal subunit protein uL29 (67 aa).

Belongs to the universal ribosomal protein uL29 family.

This Alkaliphilus metalliredigens (strain QYMF) protein is Large ribosomal subunit protein uL29.